The chain runs to 322 residues: Nuclease 1, mitochondrial (322 aa).

H142 serves as the catalytic Proton acceptor. N174 contributes to the Mg(2+) binding site.

The protein belongs to the DNA/RNA non-specific endonuclease family. In terms of assembly, homodimer. It depends on Mn(2+) as a cofactor. The cofactor is Mg(2+).

The protein resides in the mitochondrion inner membrane. This enzyme has both RNase and DNase activity. It degrades single-stranded DNA and RNA. This is Nuclease 1, mitochondrial (pnu1) from Schizosaccharomyces pombe (strain 972 / ATCC 24843) (Fission yeast).